Here is a 719-residue protein sequence, read N- to C-terminus: Protein lin-15A (719 aa).

4 disordered regions span residues 179 to 199 (FSHFPSEPSPSKPRATREGSQ), 419 to 464 (YRDH…SISW), 559 to 626 (LTTA…PTKT), and 684 to 719 (AKQVAAAPSEPKHIPPTHMEKKPEELLMDPKPEPIF). A compositionally biased stretch (low complexity) spans 570–579 (STSTDSSSSS). The segment covering 604–617 (LLQNKPTHVESSSP) has biased composition (polar residues). Residues 693-719 (EPKHIPPTHMEKKPEELLMDPKPEPIF) are compositionally biased toward basic and acidic residues.

The protein localises to the nucleus. In terms of biological role, synthetic multivulva (synMuv) class A protein. SynMuv proteins are required to repress the induction of vulval development. Acts redundantly with SynMuv class B protein lin-15B, and lin-35 to negatively regulate vulval development, most likely through antagonization of the Ras-signaling pathway. May also negatively regulate vulval development in association with other SynMuv class B proteins such as dpl-1 and efl-1. Regulates let-23 basal activity. Required for the correct expression and/or stability of lin-56. In Caenorhabditis elegans, this protein is Protein lin-15A.